A 295-amino-acid chain; its full sequence is Defective in cullin neddylation protein 1 (295 aa).

A UBA-like domain is found at glutamine 8–phenylalanine 45. One can recognise a DCUN1 domain in the interval valine 60 to arginine 272.

Interacts with the cullin cul-3. Interacts with ubiquitin via its UBA-like domain. Interacts with ned-8/nedd8.

Its subcellular location is the nucleus. Its function is as follows. Required for neddylation of cullin components of SCF-type E3 ubiquitin ligase complexes. Neddylation of cullins play an essential role in the regulation of SCF-type complexes activity. Does not act by preventing deneddylation, but rather facilitates neddylation, possibly by acting with rbx-1 to recruit the Nedd8-charged E2 enzyme to the cullin component of SCF-type complexes. This Caenorhabditis elegans protein is Defective in cullin neddylation protein 1 (dcn-1).